The following is a 298-amino-acid chain: tRNA pseudouridine synthase B (298 aa).

Residue Asp-39 is the Nucleophile of the active site.

The protein belongs to the pseudouridine synthase TruB family. Type 1 subfamily.

The catalysed reaction is uridine(55) in tRNA = pseudouridine(55) in tRNA. Functionally, responsible for synthesis of pseudouridine from uracil-55 in the psi GC loop of transfer RNAs. This Oenococcus oeni (strain ATCC BAA-331 / PSU-1) protein is tRNA pseudouridine synthase B.